The following is a 322-amino-acid chain: Retinal homeobox protein Rx-A (322 aa).

The Octapeptide motif signature appears at 32–39; that stretch reads HSIEAILG. Positions 75–87 are enriched in basic and acidic residues; sequence TEEIHPQQEHLED. The interval 75–136 is disordered; it reads TEEIHPQQEH…KKKHRRNRTT (62 aa). Over residues 100–117 the composition is skewed to polar residues; the sequence is KTSSECLSPGLSTSNSDN. The homeobox DNA-binding region spans 130–189; it reads HRRNRTTFTTYQLHELERAFEKSHYPDVYSREELAMKVNLPEVRVQVWFQNRRAKWRRQE. The OAR signature appears at 302-315; the sequence is NSIASLRMKAKEHI. The short motif at 308-312 is the Nuclear localization signal element; that stretch reads RMKAK.

Belongs to the paired homeobox family. Bicoid subfamily. In terms of tissue distribution, highly expressed in anterior neural plate followed by neural retina, pigmented epithelium, in pineal gland, diencephalon floor and epiphysis. At later stages, the neuroretina remains the primary site of expression. No expression in the developing lens and cornea.

The protein localises to the nucleus. Functionally, plays a critical role in eye formation by regulating the initial specification of retinal cells and/or their subsequent proliferation. In Xenopus laevis (African clawed frog), this protein is Retinal homeobox protein Rx-A (rax-a).